The following is an 85-amino-acid chain: Small ribosomal subunit protein bS20 (85 aa).

The protein belongs to the bacterial ribosomal protein bS20 family.

Its function is as follows. Binds directly to 16S ribosomal RNA. This Ruminiclostridium cellulolyticum (strain ATCC 35319 / DSM 5812 / JCM 6584 / H10) (Clostridium cellulolyticum) protein is Small ribosomal subunit protein bS20.